The chain runs to 260 residues: Acetylglutamate kinase (260 aa).

Substrate contacts are provided by residues 46-47 (GG), arginine 68, and asparagine 160.

Belongs to the acetylglutamate kinase family. ArgB subfamily.

The protein resides in the cytoplasm. It carries out the reaction N-acetyl-L-glutamate + ATP = N-acetyl-L-glutamyl 5-phosphate + ADP. Its pathway is amino-acid biosynthesis; L-arginine biosynthesis; N(2)-acetyl-L-ornithine from L-glutamate: step 2/4. Its function is as follows. Catalyzes the ATP-dependent phosphorylation of N-acetyl-L-glutamate. In Shewanella putrefaciens (strain CN-32 / ATCC BAA-453), this protein is Acetylglutamate kinase.